Reading from the N-terminus, the 743-residue chain is MERPPVQHGAVCGPWDMKDRLGTGGFGNVCLYQNRETGELKAIKSCRLELSVKNKERWCQEIQIMKRLNHPNVVKACDVPPEMDFLVNDVPHLAMEYCAGGDLRKLLNKPENCCGLKESQVLNLISDIGSGIQYLHENRIIHRDLKPENIVLQECNGKTVHKIIDLGYAKDLDQGSLCTSFVGTLQYLAPELFENKPYSVTVDYWSFGTMAFECIAGFRPFLHNMQPFTWHEKIKKKDHKHIYAYEEMSGEIRFSTSLPEPNNLCSIIVDKIETWLQLLLNWDPVQRGGGIDCGRPRCFMLMDQIFSLKIVHILNMTSAKIHSFHLQPEESLHTLQSRIERETGISTCNQELLLEMGVSLDPRKPASQCVIDGVKGWDSYMVYLFDKSKTVYEGPFQSRSLSECLNYIVQDSKVQLPIPQLRKVWAEAVHYVSGLKEDYSRLFQGQRAAMLSLLRFNTNLTKMKNTMVSASQQLDAKLQFFKRSIEIDLERYSDQMAYGISSEKMLRAWKEMEDKAVCFGKAGEIHFLDETIMGLHTEIVELQRSPCARRQGDVMEHLEQRAMELYKQLKPRSPDKAYSDSTEMVKILVQTVQGQDRVLKELFGHLSKLLGCKQKIIDLLPQIEMTVNNIKEADSSLMQMQAKRQREIWHLLKIACTQSSTRSLVTASGETPITSRTSAWSDQSSPQALFSMLTSKDKGREILRHTIDKNTDYQKLLSNLILQTQTTMEQTSLMSMDFSWLNQ.

In terms of domain architecture, Protein kinase spans 15 to 300 (WDMKDRLGTG…IDCGRPRCFM (286 aa)). ATP contacts are provided by residues 21-29 (LGTGGFGNV) and lysine 44. Aspartate 144 (proton acceptor) is an active-site residue. Residues 453-474 (LLRFNTNLTKMKNTMVSASQQL) form a leucine-zipper region. The interval 736-741 (MDFSWL) is NEMO-binding.

The protein belongs to the protein kinase superfamily. Ser/Thr protein kinase family. I-kappa-B kinase subfamily.

It localises to the cytoplasm. It is found in the nucleus. The catalysed reaction is L-seryl-[I-kappa-B protein] + ATP = O-phospho-L-seryl-[I-kappa-B protein] + ADP + H(+). With respect to regulation, activated when phosphorylated and inactivated when dephosphorylated. Its function is as follows. Phosphorylates inhibitors of NF-kappa-B thus leading to the dissociation of the inhibitor/NF-kappa-B complex and ultimately the degradation of the inhibitor. Phosphorylates 'Ser-10' of histone H3 at NF-kappa-B-regulated promoters during inflammatory responses triggered by cytokines. The chain is Inhibitor of nuclear factor kappa-B kinase subunit alpha (chuk) from Xenopus laevis (African clawed frog).